The chain runs to 227 residues: Large ribosomal subunit protein bL25 (227 aa).

A disordered region spans residues 1-22 (MAETKTLAAAARHGTGKGAARS).

This sequence belongs to the bacterial ribosomal protein bL25 family. CTC subfamily. Part of the 50S ribosomal subunit; part of the 5S rRNA/L5/L18/L25 subcomplex. Contacts the 5S rRNA. Binds to the 5S rRNA independently of L5 and L18.

This is one of the proteins that binds to the 5S RNA in the ribosome where it forms part of the central protuberance. The chain is Large ribosomal subunit protein bL25 from Methylocella silvestris (strain DSM 15510 / CIP 108128 / LMG 27833 / NCIMB 13906 / BL2).